We begin with the raw amino-acid sequence, 465 residues long: Type II restriction enzyme BsuMI component YdjA (465 aa).

As to quaternary structure, bsuMI restriction activity requires YdiR, YdiS and YdjA.

The enzyme catalyses Endonucleolytic cleavage of DNA to give specific double-stranded fragments with terminal 5'-phosphates.. Functionally, a P subtype restriction enzyme that recognizes the double-stranded sequence 5'-CTCGAG-3'; the cleavage site is unknown. The chain is Type II restriction enzyme BsuMI component YdjA (ydjA) from Bacillus subtilis (strain 168).